The sequence spans 294 residues: Major pollen allergen Pha a 5.3 (294 aa).

The first 25 residues, 1-25 (MAVQKYTVALFLAMALVAGPAASYA), serve as a signal peptide directing secretion.

It belongs to the Poa p IX/Phl p VI allergen family.

This chain is Major pollen allergen Pha a 5.3, found in Phalaris aquatica (Canary grass).